Here is a 195-residue protein sequence, read N- to C-terminus: MIMAQNAKHRVPFRRRREGKTDFRQRLGLLLSGKPRLVARKSLNNIIAQLMAYDEKGDIVLVSAHSRELVKMGYKGHCGNLPAAYLTGLLLGKKAVEEGLEEAILDKGLHRATKGAAIFAVLKGALDAGMDIPCGEEIIADEERLNGTHIKQYAELLKEDEEAYKKQFSKYLEKGLNPEDLPEHFEELKGKILNL.

The protein belongs to the universal ribosomal protein uL18 family. In terms of assembly, part of the 50S ribosomal subunit. Contacts the 5S and 23S rRNAs.

In terms of biological role, this is one of the proteins that bind and probably mediate the attachment of the 5S RNA into the large ribosomal subunit, where it forms part of the central protuberance. This is Large ribosomal subunit protein uL18 from Methanococcus vannielii.